A 648-amino-acid chain; its full sequence is Nucleoside triphosphatase I (648 aa).

In terms of domain architecture, Helicase ATP-binding spans Phe-48–Asn-212. Trp-61–Thr-68 is a binding site for ATP. A DEXH box motif is present at residues Asp-150–His-153. In terms of domain architecture, Helicase C-terminal spans Tyr-378–Lys-541. The interval Asp-467–Ile-533 is binding to the cap-specific mRNA (nucleoside-2'-O-)-methyltransferase.

It belongs to the helicase family. NPH I subfamily. In terms of assembly, monomer. Interacts (via C-terminus) with RAP94 (via N-terminus). Interacts with the cap-specific mRNA (nucleoside-2'-O-)-methyltransferase.

Its subcellular location is the virion. The enzyme catalyses a ribonucleoside 5'-triphosphate + H2O = a ribonucleoside 5'-diphosphate + phosphate + H(+). Its function is as follows. DNA-dependent ATPase required for providing the needed energy to achieve the termination of early transcripts. Acts in concert with the RAP94 subunit of the virion RNA polymerase and the capping enzyme/VTF to catalyze release of UUUUUNU-containing nascent RNA from the elongation complex. NPH-I must bind ssDNA in order to exhibit ATPase activity. The polypeptide is Nucleoside triphosphatase I (NPH1) (Amsacta (AmEPV)).